Reading from the N-terminus, the 569-residue chain is Endonuclease/exonuclease/phosphatase family domain-containing protein 1 (569 aa).

Residues 1–20 are disordered; that stretch reads MGSTLGCHRSIPRDPSDLSH. A lipid anchor (N-myristoyl glycine) is attached at glycine 2. Basic and acidic residues predominate over residues 11 to 20; the sequence is IPRDPSDLSH. Residues serine 16, serine 21, and serine 25 each carry the phosphoserine modification. The region spanning 38 to 67 is the HhH domain; that stretch reads ERLNINTATEEELMTLPGVTRAVARSIVEY. Phosphoserine is present on residues serine 106, serine 110, serine 160, and serine 173. A disordered region spans residues 200 to 224; sequence SRPPSTHTNGGLTFTAKPHPSPTSL. Positions 202 to 211 are enriched in polar residues; sequence PPSTHTNGGL. Threonine 265 bears the Phosphothreonine mark. The disordered stretch occupies residues 548 to 569; it reads EVPRNGNGVTLEPSEANVKHER.

The polypeptide is Endonuclease/exonuclease/phosphatase family domain-containing protein 1 (Eepd1) (Rattus norvegicus (Rat)).